Here is a 433-residue protein sequence, read N- to C-terminus: Tol-Pal system protein TolB (433 aa).

Residues 1 to 26 form the signal peptide; that stretch reads MNKLRLFRSFFAFLLPFGMATGAAHG.

The protein belongs to the TolB family. In terms of assembly, the Tol-Pal system is composed of five core proteins: the inner membrane proteins TolA, TolQ and TolR, the periplasmic protein TolB and the outer membrane protein Pal. They form a network linking the inner and outer membranes and the peptidoglycan layer.

The protein resides in the periplasm. Part of the Tol-Pal system, which plays a role in outer membrane invagination during cell division and is important for maintaining outer membrane integrity. This chain is Tol-Pal system protein TolB, found in Methylobacillus flagellatus (strain ATCC 51484 / DSM 6875 / VKM B-1610 / KT).